The following is a 564-amino-acid chain: MKLKFIFLILFFIIGNSIGIKISKEINKIKLNDISIDGEILLNKSSDSSSSQSSKIINIWPMPKKVLNGDITVYISPHFQFTTNLTKSTTLKKAMDRYYKLIFTEDSKSHSGISILNEIKILVKSEDETLQIGFDESYEIYIDDSGDDGGKIIAETVYGAIRGLETLYQMIGFDYQREYYQIKHCPWIIQDSPRYPHRGVMLDTSRHFYSVDVLKEFIEALAYNKFNVFHWHAVDSQSFPLTSTTFPKITKGSWSSQEIYSTRDIKEIIQHAKEYGIRVELEIDMPGHAYSWGIGYPSVLPANFSHSIQCQQPCPTECNIPLDVSSKESYVIAMGLLEEFNGASMFNESFFHIGGDEVAYSCWNNSLRIVDWMKRENISSFQDAAIFFEIKAIEQLIQLGKTPVMWEDAYLLFGSSGITEKLPEEVVVQIYHDPLLALNTTRDGYKTLQSPYWPYYLDNPSVDWEKVYEFEPSNGIHEKRLRLLLGGETCMWSELVDASNLFAKVFPRAFATAERLWFSIENSNSTTFAKPRLERFRCFLLERGIGAAPLNSTSPDDPNSCYSS.

An N-terminal signal peptide occupies residues 1-19 (MKLKFIFLILFFIIGNSIG). N-linked (GlcNAc...) asparagine glycans are attached at residues Asn-43, Asn-84, Asn-303, and Asn-347. Residue Glu-357 is the Proton donor of the active site. N-linked (GlcNAc...) asparagine glycosylation is found at Asn-364, Asn-377, Asn-439, Asn-524, and Asn-551.

Belongs to the glycosyl hydrolase 20 family.

Its subcellular location is the lysosome. The enzyme catalyses Hydrolysis of terminal non-reducing N-acetyl-D-hexosamine residues in N-acetyl-beta-D-hexosaminides.. In terms of biological role, responsible for the degradation of GM2 gangliosides, and a variety of other molecules containing terminal N-acetyl hexosamines. In Dictyostelium discoideum (Social amoeba), this protein is Beta-hexosaminidase subunit B2 (hexb2).